The primary structure comprises 493 residues: Homeobox protein abdominal-B (493 aa).

Residues 1–29 (MQQHHLQQQQQQQQQQEQQHLQEQQQHLQ) show a composition bias toward low complexity. 3 disordered regions span residues 1-199 (MQQH…APGQ), 322-360 (AAARQSVEGTSTSSYEPPTYSSPGGLRGYPSENYSSSGA), and 438-475 (RRMKNKKNSQRQANQQNNNNNSSSNHNHAQATQQHHSG). Residues 30 to 39 (QLHHHAHHHL) show a composition bias toward basic residues. 2 stretches are compositionally biased toward low complexity: residues 54 to 95 (PHLQ…THAV) and 105 to 134 (LVAVQQQHLPAPQQQQQLQQQQQQQQQQLA). The segment covering 144 to 153 (PAQTPTGPSA) has biased composition (polar residues). Residues 154–173 (QQQQHLTSPHHQQLPQQQTP) are compositionally biased toward low complexity. Positions 174–184 (NSVASGASSNL) are enriched in polar residues. The segment covering 329–345 (EGTSTSSYEPPTYSSPG) has biased composition (low complexity). Positions 387–446 (VRKKRKPYSKFQTLELEKEFLFNAYVSKQKRWELARNLQLTERQVKIWFQNRRMKNKKNS) form a DNA-binding region, homeobox. Residues 447-475 (QRQANQQNNNNNSSSNHNHAQATQQHHSG) show a composition bias toward low complexity.

Belongs to the Abd-B homeobox family. In terms of tissue distribution, isoform M and isoform R are expressed in ectodermal and mesodermal tissues and central nervous system of fourth to ninth embryonic abdominal segments. Later in embryogenesis, expression is seen in visceral mesoderm surrounding hindgut and in two Malpighian tubules.

The protein resides in the nucleus. In terms of biological role, sequence-specific transcription factor which is part of a developmental regulatory system that provides cells with specific positional identities on the anterior-posterior axis. In Drosophila melanogaster (Fruit fly), this protein is Homeobox protein abdominal-B (Abd-B).